We begin with the raw amino-acid sequence, 776 residues long: Cullin-1 (776 aa).

Arg-63 carries the post-translational modification Omega-N-methylarginine. The Cullin neddylation domain maps to 706–766 (DRKLLIQAAI…IEKEYLERVD (61 aa)). Lys-720 participates in a covalent cross-link: Glycyl lysine isopeptide (Lys-Gly) (interchain with G-Cter in NEDD8).

Belongs to the cullin family. Component of multiple Cul1-RING E3 ubiquitin-protein ligase complexes commonly known as SCF (SKP1-CUL1-F-box) complexes, consisting of CUL1, SKP1, RBX1 and a variable F-box domain-containing protein as substrate-specific subunit. Component of the SCF(FBXW11) complex containing FBXW11. Component of the SCF(SKP2) complex containing SKP2, in which it interacts directly with SKP1, SKP2 and RBX1. Component of the SCF(FBXW2) complex containing FBXW2. Component of the SCF(FBXO32) complex containing FBXO32. Component of the probable SCF(FBXO7) complex containing FBXO7. Component of the SCF(FBXO10) complex containing FBXO10. Component of the SCF(FBXO11) complex containing FBXO11. Component of the SCF(FBXO25) complex containing FBXO25. Component of the SCF(FBXO33) complex containing FBXO33. Component of the probable SCF(FBXO4) complex containing FBXO4. Component of the SCF(FBXO44) complex, composed of SKP1, CUL1 and FBXO44. Component of the SCF(BTRC) complex, composed of SKP1, CUL1 and BTRC. This complex binds phosphorylated NFKBIA. Part of a SCF complex consisting of CUL1, RBX1, SKP1 and FBXO2. Component of a SCF(SKP2)-like complex containing CUL1, SKP1, TRIM21 and SKP2. Component of the SCF(FBXO17) complex, composed of SKP1, CUL1 and FBXO17. Component of the SCF(FBXO27) complex, composed of SKP1, CUL1 and FBXO27. Component of the SCF(CCNF) complex consisting of CUL1, RBX1, SKP1 and CCNF. Interacts with CCNF. Component of the SCF(FBXL3) complex composed of CUL1, SKP1, RBX1 and FBXL3. Component of the SCF(FBXL21) complex composed of CUL1, SKP1, RBX1 and FBXL21. Component of the SCF(FBXO9) composed of CUL1, SKP1, RBX1 and FBXO9. Component of the SCF(FBXW7) composed of CUL1, SKP1, RBX1 and FBXW7. Component of the SCF(FBXO31) complex composed of CUL1, SKP1, RBX1 and FBXO31. Interacts with CHEK2; mediates CHEK2 ubiquitination and regulates its function. Part of a complex with TIP120A/CAND1 and RBX1. The unneddylated form interacts with TIP120A/CAND1 and the interaction mediates the exchange of the F-box substrate-specific subunit. Can self-associate. Interacts with FBXW8. Interacts with RNF7. Interacts with TRIM21. Interacts with COPS2. Interacts with UBE2M. Identified in a complex with RBX1 and GLMN. Interacts with CEP68 as part of the SCF(FBXW11) complex; the interaction is probably mediated by FBXW11 and the complex also contains CDK5RAP2 and PCNT. Interacts (when neddylated) with ARIH1; leading to activate the E3 ligase activity of ARIH1. Interacts with COPS9 isoform 2. Interacts with UBXN1. Interacts with KAT7, probably as part of an SCF complex; the interaction mediates KAT7 ubiquitination. Interacts with NOTCH2. Part of a complex that contains DCUN1D5, CUL1 and RBX1; this complex is bridged by CUL1. Interacts (unneddylated form) with DCUN1D1, DCUN1D2, DCUN1D3, DCUN1D4 and DCUN1D5; these interactions promote the cullin neddylation. Interacts (via the C-terminal domain) with CUL7; the interaction seems to be mediated by FBXW8; it is likely specific to FBXW8, but not other F-box proteins. Interacts with UBR2, as part of SCF(BTRC) complex; the interaction mediates 'Lys-48'-linked ubiquitination of UBR2 and is regulated by DUSP22 in the T-cell receptor signaling pathway. In terms of assembly, (Microbial infection) Interacts with Epstein-Barr virus BPLF1. As to quaternary structure, (Microbial infection) Interacts with Human adenovirus early E1A protein; this interaction inhibits RBX1-CUL1-dependent elongation reaction of ubiquitin chains by the SCF(FBXW7) complex. (Microbial infection) Interacts with vaccinia virus protein C9L. In terms of assembly, (Microbial infection) Interacts with Epstein-Barr virus (EBV) tegument protein BGLF2; this interaction might facilitate CUL1 recruitment to STAT2, leading to ubiquitination and degradation of the latter. Post-translationally, neddylated; which enhances the ubiquitination activity of SCF. Neddylation prevents binding of the inhibitor CAND1. Neddylation leads to structural rearrangment in the complex that allows interaction between the E2 ubiquitin-conjugating enzyme and the acceptor ubiquitin. Deneddylated via its interaction with the COP9 signalosome (CSN) complex. In terms of processing, (Microbial infection) Deneddylated by Epstein-Barr virus BPLF1 leading to a S-phase-like environment that is required for efficient replication of the viral genome. In terms of tissue distribution, expressed in lung fibroblasts.

The protein operates within protein modification; protein ubiquitination. Its function is as follows. Core component of multiple cullin-RING-based SCF (SKP1-CUL1-F-box protein) E3 ubiquitin-protein ligase complexes, which mediate the ubiquitination of proteins involved in cell cycle progression, signal transduction and transcription. SCF complexes and ARIH1 collaborate in tandem to mediate ubiquitination of target proteins. In the SCF complex, serves as a rigid scaffold that organizes the SKP1-F-box protein and RBX1 subunits. May contribute to catalysis through positioning of the substrate and the ubiquitin-conjugating enzyme. The E3 ubiquitin-protein ligase activity of the complex is dependent on the neddylation of the cullin subunit and exchange of the substrate recognition component is mediated by TIP120A/CAND1. The functional specificity of the SCF complex depends on the F-box protein as substrate recognition component. SCF(BTRC) and SCF(FBXW11) direct ubiquitination of CTNNB1 and participate in Wnt signaling. SCF(FBXW11) directs ubiquitination of phosphorylated NFKBIA. SCF(BTRC) directs ubiquitination of NFKBIB, NFKBIE, ATF4, SMAD3, SMAD4, CDC25A, FBXO5 and probably NFKB2. SCF(BTRC) and/or SCF(FBXW11) direct ubiquitination of CEP68. SCF(SKP2) directs ubiquitination of phosphorylated CDKN1B/p27kip and is involved in regulation of G1/S transition. SCF(SKP2) directs ubiquitination of ORC1, CDT1, RBL2, ELF4, CDKN1A, RAG2, FOXO1A, and probably MYC and TAL1. SCF(FBXW7) directs ubiquitination of CCNE1, NOTCH1 released notch intracellular domain (NICD), and probably PSEN1. SCF(FBXW2) directs ubiquitination of GCM1. SCF(FBXO32) directs ubiquitination of MYOD1. SCF(FBXO7) directs ubiquitination of BIRC2 and DLGAP5. SCF(FBXO33) directs ubiquitination of YBX1. SCF(FBXO1) directs ubiquitination of BCL6 and DTL but does not seem to direct ubiquitination of TP53. SCF(BTRC) mediates the ubiquitination of NFKBIA at 'Lys-21' and 'Lys-22'; the degradation frees the associated NFKB1-RELA dimer to translocate into the nucleus and to activate transcription. SCF(CCNF) directs ubiquitination of CCP110. SCF(FBXL3) and SCF(FBXL21) direct ubiquitination of CRY1 and CRY2. SCF(FBXO9) directs ubiquitination of TTI1 and TELO2. SCF(FBXO10) directs ubiquitination of BCL2. Neddylated CUL1-RBX1 ubiquitinates p53/TP53 recruited by Cul7-RING(FBXW8) complex. SCF(BTRC) directs 'Lys-48'-linked ubiquitination of UBR2 in the T-cell receptor signaling pathway. The SCF(FBXO31) protein ligase complex specifically mediates the ubiquitination of proteins amidated at their C-terminus in response to oxidative stress. This chain is Cullin-1 (CUL1), found in Homo sapiens (Human).